The following is a 210-amino-acid chain: MELHNIRDEYTKRVLSQHDCHKNPISQFEQWQKEAIHAQVNEPTAMNIATVDEQGRPNSRMVLLKEVNEQGFVFFTNYLSRKGGCIERNPYVALTFFWPELERQVRIEGKAVKIPAEQSDKYFATRPYTSRIGAWASEQSAVISNYKSLLAKAALVAAKHPLNVPRPDYWGGYLVVPETVEFWQGRPSRLHDRIRYRKESDNWIRERLSP.

Substrate-binding positions include 7 to 10 (RDEY) and K65. FMN-binding positions include 60–65 (RMVLLK), 75–76 (FT), R81, K82, and Q104. Substrate contacts are provided by Y122, R126, and S130. FMN-binding positions include 139 to 140 (QS) and W183. Substrate is bound at residue 189 to 191 (RLH). R193 contacts FMN.

The protein belongs to the pyridoxamine 5'-phosphate oxidase family. Homodimer. Requires FMN as cofactor.

It carries out the reaction pyridoxamine 5'-phosphate + O2 + H2O = pyridoxal 5'-phosphate + H2O2 + NH4(+). The catalysed reaction is pyridoxine 5'-phosphate + O2 = pyridoxal 5'-phosphate + H2O2. The protein operates within cofactor metabolism; pyridoxal 5'-phosphate salvage; pyridoxal 5'-phosphate from pyridoxamine 5'-phosphate: step 1/1. Its pathway is cofactor metabolism; pyridoxal 5'-phosphate salvage; pyridoxal 5'-phosphate from pyridoxine 5'-phosphate: step 1/1. In terms of biological role, catalyzes the oxidation of either pyridoxine 5'-phosphate (PNP) or pyridoxamine 5'-phosphate (PMP) into pyridoxal 5'-phosphate (PLP). This Haemophilus influenzae (strain 86-028NP) protein is Pyridoxine/pyridoxamine 5'-phosphate oxidase.